A 242-amino-acid chain; its full sequence is uncharacterized protein (242 aa).

The 114-residue stretch at threonine 3–asparagine 116 folds into the Response regulatory domain. Residue aspartate 54 is modified to 4-aspartylphosphate. Residues isoleucine 139 to isoleucine 240 form the HTH LytTR-type domain.

This is an uncharacterized protein from Vibrio parahaemolyticus serotype O3:K6 (strain RIMD 2210633).